Here is a 236-residue protein sequence, read N- to C-terminus: Repetitive proline-rich cell wall protein (236 aa).

A signal peptide spans 1–22 (MASSNFLVLLLFALFVIPQGLA). A run of 41 repeats spans residues 27 to 31 (PPVYQ), 32 to 36 (PPVYK), 37 to 41 (PPVEK), 42 to 46 (PPVYK), 47 to 51 (PPVEK), 52 to 56 (PPVYK), 57 to 61 (PPVYK), 62 to 66 (PPVEK), 67 to 71 (PPVYK), 72 to 76 (PPVVK), 77 to 81 (PPVYK), 82 to 86 (PPVYK), 87 to 91 (PPVYK), 92 to 96 (PPVEK), 97 to 101 (PPVYK), 102 to 106 (PPVYK), 107 to 111 (PPVYK), 112 to 116 (PPVVK), 117 to 121 (PPVYK), 122 to 126 (PPVYK), 127 to 131 (PPVEK), 132 to 136 (PPVYK), 137 to 141 (PPVYK), 142 to 146 (PPVEK), 147 to 151 (PPVYK), 152 to 156 (PPVEK), 157 to 161 (PPVYK), 162 to 166 (PPVYK), 167 to 171 (PPVYK), 172 to 176 (PPVVK), 177 to 181 (PPVYK), 182 to 186 (PPVYK), 187 to 191 (PPVYK), 192 to 196 (PPVEK), 197 to 201 (PPVYK), 202 to 206 (PPVYK), 207 to 211 (PPVEK), 212 to 216 (PPVYK), 217 to 221 (PPVYK), 222 to 226 (PPVEK), and 227 to 231 (PPVYG). The interval 27 to 236 (PPVYQPPVYK…PPVYGPPHHP (210 aa)) is 42 X 5 AA approximate tandem repeats of P-P-V-[EYV]-[KQG]. The segment at 143-177 (PVEKPPVYKPPVEKPPVYKPPVYKPPVYKPPVVKP) is disordered. Residues 204 to 236 (VYKPPVEKPPVYKPPVYKPPVEKPPVYGPPHHP) are disordered. A 42; approximate repeat occupies 232 to 236 (PPHHP).

It belongs to the plant proline-rich protein superfamily. ENOD12 family.

It is found in the secreted. Its subcellular location is the cell wall. In terms of biological role, this is a developmentally regulated putative cell wall protein. This Medicago sativa (Alfalfa) protein is Repetitive proline-rich cell wall protein (PRP).